The primary structure comprises 284 residues: Protoheme IX farnesyltransferase (284 aa).

Transmembrane regions (helical) follow at residues 2-19 (SLVV…PVTV), 23-45 (IALT…NMWS), 69-89 (GEAL…LGLA), 92-112 (LFAA…YSMW), 121-141 (IVIG…VATG), 148-168 (LFMF…LALF), 194-214 (VLVY…TGTG), 217-237 (LYLA…VRTW), and 263-283 (LFLH…GLGG).

This sequence belongs to the UbiA prenyltransferase family. Protoheme IX farnesyltransferase subfamily. As to quaternary structure, interacts with CtaA.

The protein resides in the cell inner membrane. It carries out the reaction heme b + (2E,6E)-farnesyl diphosphate + H2O = Fe(II)-heme o + diphosphate. It functions in the pathway porphyrin-containing compound metabolism; heme O biosynthesis; heme O from protoheme: step 1/1. In terms of biological role, converts heme B (protoheme IX) to heme O by substitution of the vinyl group on carbon 2 of heme B porphyrin ring with a hydroxyethyl farnesyl side group. The polypeptide is Protoheme IX farnesyltransferase (Cereibacter sphaeroides (Rhodobacter sphaeroides)).